We begin with the raw amino-acid sequence, 238 residues long: Tyrosine recombinase XerD-like (238 aa).

The Core-binding (CB) domain maps to 1 to 75 (MKLPNEIDEY…SANQYLLFLY (75 aa)). Positions 90 to 238 (VQKKSQTAQS…TITTLEKYYR (149 aa)) constitute a Tyr recombinase domain. Residues lysine 154 and arginine 204 contribute to the active site. Residue tyrosine 236 is the O-(3'-phospho-DNA)-tyrosine intermediate of the active site.

It belongs to the 'phage' integrase family. XerD-like subfamily.

It is found in the cytoplasm. Functionally, putative tyrosine recombinase. Not involved in the cutting and rejoining of the recombining DNA molecules on dif(SL) site. The chain is Tyrosine recombinase XerD-like (ynbA) from Lactococcus lactis subsp. lactis (strain IL1403) (Streptococcus lactis).